Here is a 245-residue protein sequence, read N- to C-terminus: 1-(5-phosphoribosyl)-5-[(5-phosphoribosylamino)methylideneamino] imidazole-4-carboxamide isomerase (245 aa).

The active-site Proton acceptor is Asp-7. Asp-129 acts as the Proton donor in catalysis.

It belongs to the HisA/HisF family.

The protein resides in the cytoplasm. The catalysed reaction is 1-(5-phospho-beta-D-ribosyl)-5-[(5-phospho-beta-D-ribosylamino)methylideneamino]imidazole-4-carboxamide = 5-[(5-phospho-1-deoxy-D-ribulos-1-ylimino)methylamino]-1-(5-phospho-beta-D-ribosyl)imidazole-4-carboxamide. It participates in amino-acid biosynthesis; L-histidine biosynthesis; L-histidine from 5-phospho-alpha-D-ribose 1-diphosphate: step 4/9. This Shigella flexneri serotype 5b (strain 8401) protein is 1-(5-phosphoribosyl)-5-[(5-phosphoribosylamino)methylideneamino] imidazole-4-carboxamide isomerase.